Consider the following 89-residue polypeptide: Protein S100-A6 (89 aa).

EF-hand domains lie at 12–47 (LVAI…IGSK) and 48–83 (LQDA…LALI). The Ca(2+) site is built by Thr28 and Glu33. The residue at position 40 (Lys40) is an N6-acetyllysine. Ser46 carries the post-translational modification Phosphoserine. Lys47 bears the N6-acetyllysine; alternate mark. An N6-succinyllysine; alternate modification is found at Lys47. Positions 61, 63, 65, 67, and 72 each coordinate Ca(2+).

Belongs to the S-100 family. As to quaternary structure, homodimer; head to tail assembly of 2 subunits. Interacts with CACYBP in a calcium-dependent manner. Interacts with ANXA2 and ANXA11 (via N-terminus). Interacts with SUGT1. Interacts with TP53; has higher affinity for TP53 that is phosphorylated on its N-terminal domain, and lower affinity for TP53 that is phosphorylated on its C-terminal domain. Interacts with tropomyosin. Interacts with FKBP4. Interacts with PPP5C (via TPR repeats); the interaction is calcium-dependent and modulates PPP5C activity. Interacts with TPPP; this interaction inhibits TPPP dimerization.

The protein resides in the nucleus envelope. The protein localises to the cytoplasm. Its subcellular location is the cell membrane. Functionally, may function as calcium sensor and modulator, contributing to cellular calcium signaling. May function by interacting with other proteins, such as TPR-containing proteins, and indirectly play a role in many physiological processes such as the reorganization of the actin cytoskeleton and in cell motility. Binds 2 calcium ions. Calcium binding is cooperative. This Mus musculus (Mouse) protein is Protein S100-A6 (S100a6).